Here is a 936-residue protein sequence, read N- to C-terminus: UPF0746 protein DDB_G0280787 (936 aa).

A compositionally biased stretch (basic and acidic residues) spans 1–19 (MISNKRKEIDTIDGHHEKD). A disordered region spans residues 1–30 (MISNKRKEIDTIDGHHEKDNDDDDSDGIDN). Residues 44–78 (SGSTNYRELQIIAKSLGLASNGKKQLVYNRIEGYF) form the SAP domain. Residues 91-110 (ETNQQEEKKEEEQQQPQPQE) are disordered.

It belongs to the UPF0746 family.

The chain is UPF0746 protein DDB_G0280787 from Dictyostelium discoideum (Social amoeba).